Here is a 356-residue protein sequence, read N- to C-terminus: Syntaxin-7A (356 aa).

The Cytoplasmic segment spans residues Met1–Cys333. Composition is skewed to low complexity over residues Asn32 to Asn74 and Asn207 to Gln224. Disordered regions lie at residues Asn32–Tyr88 and Glu187–Gln247. Residues Glu233–Arg244 are compositionally biased toward basic and acidic residues. A t-SNARE coiled-coil homology domain is found at Asn259–Ala321. Residues Trp334–Leu354 traverse the membrane as a helical; Anchor for type IV membrane protein segment. The Vesicular segment spans residues Arg355–Lys356.

This sequence belongs to the syntaxin family. Component of the SNARE complex composed of syn7A, syn8A, vamp7A and vti1A. Interacts with nsfA, snpA and snpC.

The protein localises to the endosome membrane. Functionally, involved in the targeting and/or fusion of transport vesicles to their target membrane during transport of proteins from the early endosome to the lysosome. Required for fusion of late endosomes with lysosomes and homotypic lysosomal fusion. May be involved in protein trafficking from the plasma membrane to the early endosome (EE) as well as in homotypic fusion of endocytic organelles. The sequence is that of Syntaxin-7A from Dictyostelium discoideum (Social amoeba).